The primary structure comprises 104 residues: Phosphate metabolism protein 6 (104 aa).

The chain crosses the membrane as a helical span at residues 76-96 (IIVIIIVLLLYSLTMVGLFYV).

It is found in the vacuole membrane. This Saccharomyces cerevisiae (strain ATCC 204508 / S288c) (Baker's yeast) protein is Phosphate metabolism protein 6 (PHM6).